The sequence spans 225 residues: 3-dehydroquinate dehydratase (225 aa).

3-dehydroquinate-binding positions include Ser6, 30 to 32 (EWR), and Arg62. The active-site Proton donor/acceptor is the His118. The active-site Schiff-base intermediate with substrate is the Lys143. The 3-dehydroquinate site is built by Arg186, Ser205, and Gln209.

Belongs to the type-I 3-dehydroquinase family. As to quaternary structure, homodimer.

It carries out the reaction 3-dehydroquinate = 3-dehydroshikimate + H2O. Its pathway is metabolic intermediate biosynthesis; chorismate biosynthesis; chorismate from D-erythrose 4-phosphate and phosphoenolpyruvate: step 3/7. Functionally, involved in the third step of the chorismate pathway, which leads to the biosynthesis of aromatic amino acids. Catalyzes the cis-dehydration of 3-dehydroquinate (DHQ) and introduces the first double bond of the aromatic ring to yield 3-dehydroshikimate. This chain is 3-dehydroquinate dehydratase, found in Streptococcus pneumoniae (strain P1031).